The sequence spans 231 residues: GTP-binding protein RHO3 (231 aa).

23–30 (GDGACGKT) lines the GTP pocket. The short motif at 45-53 (YEPTVFENY) is the Effector region element. Residues 70-74 (DTAGQ) and 128-131 (LKCD) each bind GTP. The span at 139-150 (SNAITPNNIQQD) shows a compositional bias: polar residues. The tract at residues 139-165 (SNAITPNNIQQDNSVSNDNGNNINSTS) is disordered. Low complexity predominate over residues 151-165 (NSVSNDNGNNINSTS). At C228 the chain carries Cysteine methyl ester. C228 carries S-farnesyl cysteine lipidation. Residues 229–231 (TIM) constitute a propeptide, removed in mature form.

Belongs to the small GTPase superfamily. Rho family. Interacts with TOS7.

Its subcellular location is the cell membrane. Its activity is regulated as follows. Activity is positively regulated by the GTPase activating protein (GAP) RGD1. Plays an important role in cell growth. Required to keep the uninucleated state. Modulates morphogenesis during bud growth via directing organization of the actin cytoskeleton and the position of the secretory machinery for exocytosis. In Saccharomyces cerevisiae (strain ATCC 204508 / S288c) (Baker's yeast), this protein is GTP-binding protein RHO3.